The following is a 375-amino-acid chain: MADKRDYYEVLGVPKDADDAAIKKAYRQLAKKYHPDMNPGDKEAEIKFKEASEAYAVLSDAEKRRQYDQFGHAAFEGGAGGAGAGGFDFDFGDMGDIFGDLFGGMFGGGGSRRNSNGPRRGADVRVNVRITFDESVRGTTKKIDVTLKDECSSCHGTGAKPGTSPETCSKCGGRGQVTFTQQSFLGMVRSQQPCPDCHGTGKIIKEKCPDCYGTGYISSKKTIEVNIPAGIDNGQCVRIQGKGEPGVNGGPRGDLLVAVIISASTEFERDGYNIFSNVVISYPTAVLGGEIKVKTVDGEVLYEVKPGTASGTRVRLKGKGMPSVRNAAQRGDHYITLIVDIPTKLNQEQKDALMAYEKALTGNERHGKKKGLFGK.

Residues 6 to 71 (DYYEVLGVPK…EKRRQYDQFG (66 aa)) form the J domain. A CR-type zinc finger spans residues 138-220 (GTTKKIDVTL…CYGTGYISSK (83 aa)). Residues cysteine 151, cysteine 154, cysteine 168, cysteine 171, cysteine 194, cysteine 197, cysteine 208, and cysteine 211 each contribute to the Zn(2+) site. CXXCXGXG motif repeat units lie at residues 151-158 (CSSCHGTG), 168-175 (CSKCGGRG), 194-201 (CPDCHGTG), and 208-215 (CPDCYGTG).

It belongs to the DnaJ family. Homodimer. It depends on Zn(2+) as a cofactor.

The protein resides in the cytoplasm. Participates actively in the response to hyperosmotic and heat shock by preventing the aggregation of stress-denatured proteins and by disaggregating proteins, also in an autonomous, DnaK-independent fashion. Unfolded proteins bind initially to DnaJ; upon interaction with the DnaJ-bound protein, DnaK hydrolyzes its bound ATP, resulting in the formation of a stable complex. GrpE releases ADP from DnaK; ATP binding to DnaK triggers the release of the substrate protein, thus completing the reaction cycle. Several rounds of ATP-dependent interactions between DnaJ, DnaK and GrpE are required for fully efficient folding. Also involved, together with DnaK and GrpE, in the DNA replication of plasmids through activation of initiation proteins. This Lachnospira eligens (strain ATCC 27750 / DSM 3376 / VPI C15-48 / C15-B4) (Eubacterium eligens) protein is Chaperone protein DnaJ.